Reading from the N-terminus, the 127-residue chain is Large ribosomal subunit protein bL12 (127 aa).

It belongs to the bacterial ribosomal protein bL12 family. As to quaternary structure, homodimer. Part of the ribosomal stalk of the 50S ribosomal subunit. Forms a multimeric L10(L12)X complex, where L10 forms an elongated spine to which 2 to 4 L12 dimers bind in a sequential fashion. Binds GTP-bound translation factors.

Its function is as follows. Forms part of the ribosomal stalk which helps the ribosome interact with GTP-bound translation factors. Is thus essential for accurate translation. In Desulforapulum autotrophicum (strain ATCC 43914 / DSM 3382 / VKM B-1955 / HRM2) (Desulfobacterium autotrophicum), this protein is Large ribosomal subunit protein bL12.